We begin with the raw amino-acid sequence, 294 residues long: Mitochondrial substrate carrier family protein ucpB (294 aa).

The Mitochondrial intermembrane portion of the chain corresponds to 1–10; it reads MTSQESIGIK. Solcar repeat units follow at residues 9-93, 101-187, and 197-288; these read IKFL…IKNY, TNLL…IKHM, and DGLQ…LRKV. The helical transmembrane segment at 11–31 threads the bilayer; it reads FLFGGLSCMGAAVVSNPVDVL. Residues 32 to 67 lie on the Mitochondrial matrix side of the membrane; the sequence is KTRFQIHGEGIDSKSLGLVNGTIKIIKNEGISAMYK. A helical transmembrane segment spans residues 68 to 88; sequence GLTPSLLREATYSTLRMGGYD. Over 89-106 the chain is Mitochondrial intermembrane; that stretch reads VIKNYFIDSNGKTNLLSK. A helical transmembrane segment spans residues 107–127; sequence VTSGALSGALGACITSPTDLI. At 128–161 the chain is on the mitochondrial matrix side; the sequence is KVRMQASSKGVKYDSISSAFKEIIAKEGIKGLWK. Residues 162–182 form a helical membrane-spanning segment; sequence GVGPTTQRAALLTASQIPSYD. The Mitochondrial intermembrane segment spans residues 183 to 192; it reads HIKHMILDHG. Residues 193-213 form a helical membrane-spanning segment; sequence IIQVDGLQVHIVSSIFAGLIA. Topologically, residues 214-267 are mitochondrial matrix; sequence SITTSPVDLVKTRIMNQPFDSNGVGLIYKSSYDCFKKTFQSEGISGLYKGFLPN. Residues 268 to 285 form a helical membrane-spanning segment; it reads WFRIGPHTIVTFILYEYL. The Mitochondrial intermembrane portion of the chain corresponds to 286–294; sequence RKVSGIKPI.

Belongs to the mitochondrial carrier (TC 2.A.29) family.

It localises to the mitochondrion inner membrane. Functionally, mitochondrial solute carriers shuttle metabolites, nucleotides, and cofactors through the mitochondrial inner membrane. This chain is Mitochondrial substrate carrier family protein ucpB (ucpB), found in Dictyostelium discoideum (Social amoeba).